A 334-amino-acid chain; its full sequence is Glutaminase (334 aa).

Positions 76, 126, 170, 177, 201, 253, and 271 each coordinate substrate.

It belongs to the glutaminase family. As to quaternary structure, homotetramer.

The catalysed reaction is L-glutamine + H2O = L-glutamate + NH4(+). In Trichormus variabilis (strain ATCC 29413 / PCC 7937) (Anabaena variabilis), this protein is Glutaminase.